A 405-amino-acid chain; its full sequence is L-rhamnonate dehydratase (405 aa).

2 residues coordinate substrate: histidine 33 and arginine 59. The Mg(2+) site is built by aspartate 226, glutamate 252, and glutamate 280. Residue histidine 329 is the Proton acceptor of the active site. Glutamate 349 provides a ligand contact to substrate.

The protein belongs to the mandelate racemase/muconate lactonizing enzyme family. RhamD subfamily. In terms of assembly, homooctamer; tetramer of dimers. The cofactor is Mg(2+).

It carries out the reaction L-rhamnonate = 2-dehydro-3-deoxy-L-rhamnonate + H2O. Functionally, catalyzes the dehydration of L-rhamnonate to 2-keto-3-deoxy-L-rhamnonate (KDR). This Escherichia coli O81 (strain ED1a) protein is L-rhamnonate dehydratase.